Reading from the N-terminus, the 342-residue chain is Ribosomal RNA small subunit methyltransferase C (342 aa).

This sequence belongs to the methyltransferase superfamily. RsmC family. In terms of assembly, monomer.

It is found in the cytoplasm. It carries out the reaction guanosine(1207) in 16S rRNA + S-adenosyl-L-methionine = N(2)-methylguanosine(1207) in 16S rRNA + S-adenosyl-L-homocysteine + H(+). Specifically methylates the guanine in position 1207 of 16S rRNA in the 30S particle. This Shewanella loihica (strain ATCC BAA-1088 / PV-4) protein is Ribosomal RNA small subunit methyltransferase C.